The primary structure comprises 269 residues: Phosphonates import ATP-binding protein PhnC (269 aa).

In terms of domain architecture, ABC transporter spans 2 to 245; it reads LVVEGLTCRF…VARELYDLEA (244 aa). Position 34-41 (34-41) interacts with ATP; the sequence is GRSGAGKS.

The protein belongs to the ABC transporter superfamily. Phosphonates importer (TC 3.A.1.9.1) family. As to quaternary structure, the complex is composed of two ATP-binding proteins (PhnC), two transmembrane proteins (PhnE) and a solute-binding protein (PhnD).

It is found in the cell inner membrane. The catalysed reaction is phosphonate(out) + ATP + H2O = phosphonate(in) + ADP + phosphate + H(+). Its function is as follows. Part of the ABC transporter complex PhnCDE involved in phosphonates import. Responsible for energy coupling to the transport system. The polypeptide is Phosphonates import ATP-binding protein PhnC (Bradyrhizobium diazoefficiens (strain JCM 10833 / BCRC 13528 / IAM 13628 / NBRC 14792 / USDA 110)).